A 352-amino-acid chain; its full sequence is Selenide, water dikinase (352 aa).

The active site involves C23. Residues K26 and 54–56 contribute to the ATP site; that span reads SRD. A Mg(2+)-binding site is contributed by D57. ATP is bound by residues D74, D97, and 145–147; that span reads GHS. Mg(2+) is bound at residue D97. Residue D233 participates in Mg(2+) binding.

The protein belongs to the selenophosphate synthase 1 family. Class I subfamily. Homodimer. The cofactor is Mg(2+).

The enzyme catalyses hydrogenselenide + ATP + H2O = selenophosphate + AMP + phosphate + 2 H(+). Synthesizes selenophosphate from selenide and ATP. The sequence is that of Selenide, water dikinase from Shewanella baltica (strain OS223).